A 348-amino-acid chain; its full sequence is Dihydroorotase (348 aa).

Positions 17 and 19 each coordinate Zn(2+). Substrate contacts are provided by residues histidine 19–arginine 21 and asparagine 45. Zn(2+) contacts are provided by lysine 103, histidine 140, and histidine 178. N6-carboxylysine is present on lysine 103. Histidine 140 contributes to the substrate binding site. Residue leucine 223 coordinates substrate. Aspartate 251 contributes to the Zn(2+) binding site. The active site involves aspartate 251. 2 residues coordinate substrate: histidine 255 and alanine 267.

Belongs to the metallo-dependent hydrolases superfamily. DHOase family. Class II DHOase subfamily. As to quaternary structure, homodimer. Zn(2+) is required as a cofactor.

The catalysed reaction is (S)-dihydroorotate + H2O = N-carbamoyl-L-aspartate + H(+). It functions in the pathway pyrimidine metabolism; UMP biosynthesis via de novo pathway; (S)-dihydroorotate from bicarbonate: step 3/3. Its function is as follows. Catalyzes the reversible cyclization of carbamoyl aspartate to dihydroorotate. In Yersinia pseudotuberculosis serotype I (strain IP32953), this protein is Dihydroorotase.